Consider the following 176-residue polypeptide: Ribosome maturation factor RimM (176 aa).

One can recognise a PRC barrel domain in the interval 100 to 173 (PGEFHLLDLL…WLMVCPPPGL (74 aa)).

Belongs to the RimM family. In terms of assembly, binds ribosomal protein uS19.

The protein localises to the cytoplasm. An accessory protein needed during the final step in the assembly of 30S ribosomal subunit, possibly for assembly of the head region. Essential for efficient processing of 16S rRNA. May be needed both before and after RbfA during the maturation of 16S rRNA. It has affinity for free ribosomal 30S subunits but not for 70S ribosomes. This Prochlorococcus marinus (strain SARG / CCMP1375 / SS120) protein is Ribosome maturation factor RimM.